The primary structure comprises 471 residues: Probable ribonuclease FAU-1 (471 aa).

The protein belongs to the FAU-1 family.

In terms of biological role, probable RNase involved in rRNA stability through maturation and/or degradation of precursor rRNAs. Binds to RNA in loop regions with AU-rich sequences. The protein is Probable ribonuclease FAU-1 of Aeropyrum pernix (strain ATCC 700893 / DSM 11879 / JCM 9820 / NBRC 100138 / K1).